The primary structure comprises 670 residues: DNA-binding transcriptional activator HyfR (670 aa).

One can recognise a GAF domain in the interval 169–311; the sequence is DLDDLIADVA…HIADRIAIAV (143 aa). A Cys-rich segment, might bind a metal cluster motif is present at residues 207–221; that stretch reads CSDLSASHCACLPRC. The 230-residue stretch at 347 to 576 folds into the Sigma-54 factor interaction domain; the sequence is IIYQSQAMED…LENVIERAVL (230 aa). ATP contacts are provided by residues 375–382 and 438–447; these read GETGTGKE and ADGGTLFLDE. The segment at residues 641-660 is a DNA-binding region (H-T-H motif); that stretch reads PRGAATRLGMKRTTLLSRMQ.

A transcriptional activator of its own operon; when overexpressed operon expression is strongly enhanced by low pH (under pH 6.0), strongly inhibited by O(2) but only weakly stimulated by fumarate. Expression in situ is very weak. The sequence is that of DNA-binding transcriptional activator HyfR from Escherichia coli (strain K12).